The chain runs to 276 residues: Urease accessory protein UreD (276 aa).

Belongs to the UreD family. In terms of assembly, ureD, UreF and UreG form a complex that acts as a GTP-hydrolysis-dependent molecular chaperone, activating the urease apoprotein by helping to assemble the nickel containing metallocenter of UreC. The UreE protein probably delivers the nickel.

The protein localises to the cytoplasm. Functionally, required for maturation of urease via the functional incorporation of the urease nickel metallocenter. The protein is Urease accessory protein UreD of Polaromonas naphthalenivorans (strain CJ2).